A 345-amino-acid chain; its full sequence is DNA-directed RNA polymerases I and III subunit rpac1 (345 aa).

Over residues 1 to 11 (MVNKSTTNGVS) the composition is skewed to polar residues. Positions 1 to 20 (MVNKSTTNGVSDPNLENKRT) are disordered.

This sequence belongs to the archaeal Rpo3/eukaryotic RPB3 RNA polymerase subunit family. As to quaternary structure, component of the RNA polymerase I (Pol I) and RNA polymerase III (Pol III) complexes consisting of at least 13 and 17 subunits, respectively. Interacts with RPAC19/RPAC2.

Its subcellular location is the nucleus. In terms of biological role, DNA-dependent RNA polymerase catalyzes the transcription of DNA into RNA using the four ribonucleoside triphosphates as substrates. Common component of RNA polymerases I and III which synthesize ribosomal RNA precursors and small RNAs, such as 5S rRNA and tRNAs, respectively. RPAC1 is part of the Pol core element with the central large cleft and probably a clamp element that moves to open and close the cleft. The sequence is that of DNA-directed RNA polymerases I and III subunit rpac1 (polr1c) from Dictyostelium discoideum (Social amoeba).